A 106-amino-acid chain; its full sequence is Iron-sulfur cluster assembly protein CyaY (106 aa).

The protein belongs to the frataxin family.

Functionally, involved in iron-sulfur (Fe-S) cluster assembly. May act as a regulator of Fe-S biogenesis. In Escherichia coli O7:K1 (strain IAI39 / ExPEC), this protein is Iron-sulfur cluster assembly protein CyaY.